We begin with the raw amino-acid sequence, 278 residues long: uncharacterized protein (278 aa).

The protein belongs to the manganese catalase family.

This is an uncharacterized protein from Bacillus subtilis (strain 168).